A 233-amino-acid polypeptide reads, in one-letter code: Segregation and condensation protein A (233 aa).

Belongs to the ScpA family. In terms of assembly, component of a cohesin-like complex composed of ScpA, ScpB and the Smc homodimer, in which ScpA and ScpB bind to the head domain of Smc. The presence of the three proteins is required for the association of the complex with DNA.

The protein resides in the cytoplasm. Participates in chromosomal partition during cell division. May act via the formation of a condensin-like complex containing Smc and ScpB that pull DNA away from mid-cell into both cell halves. In Streptococcus pyogenes serotype M1, this protein is Segregation and condensation protein A.